A 33-amino-acid polypeptide reads, in one-letter code: Potassium channel toxin alpha-KTx 10.4 (33 aa).

Disulfide bonds link cysteine 3-cysteine 22, cysteine 8-cysteine 27, and cysteine 12-cysteine 29.

It belongs to the short scorpion toxin superfamily. Potassium channel inhibitor family. Alpha-KTx 10 subfamily. Expressed by the venom gland.

It localises to the secreted. In terms of biological role, blocks human voltage-gated potassium channel Kv1.2/KCNA2 (IC(50)=3.6 nM) and Kv1.3/KCNA3 (IC(50)=72 nM). The polypeptide is Potassium channel toxin alpha-KTx 10.4 (Centruroides tecomanus (Scorpion)).